A 241-amino-acid chain; its full sequence is Probable transcriptional regulatory protein Mpe_A1337 (241 aa).

Residues 1–20 form a disordered region; the sequence is MAGHSKWANIQHRKGRQDEK.

It belongs to the TACO1 family.

It is found in the cytoplasm. This chain is Probable transcriptional regulatory protein Mpe_A1337, found in Methylibium petroleiphilum (strain ATCC BAA-1232 / LMG 22953 / PM1).